We begin with the raw amino-acid sequence, 391 residues long: Ammonium transporter Amt1 (391 aa).

Residues M1–A7 lie on the Extracellular side of the membrane. Residues W8–Y27 traverse the membrane as a helical segment. Over A28–N38 the chain is Cytoplasmic. The chain crosses the membrane as a helical span at residues M39 to Y57. Residues G58–F89 lie on the Extracellular side of the membrane. The helical transmembrane segment at M90 to S106 threads the bilayer. The Cytoplasmic portion of the chain corresponds to A107 to K113. Residues V114 to W137 traverse the membrane as a helical segment. The Extracellular segment spans residues G138 to G152. The chain crosses the membrane as a helical span at residues G153–T170. Over I171 to P188 the chain is Cytoplasmic. The chain crosses the membrane as a helical span at residues L189–S208. The Extracellular segment spans residues A209 to I217. A helical membrane pass occupies residues N218–I237. The Cytoplasmic portion of the chain corresponds to G238 to G245. The helical transmembrane segment at S246–A263 threads the bilayer. The Extracellular segment spans residues A264–D268. A helical transmembrane segment spans residues V269–M287. Topologically, residues D288–D300 are cytoplasmic. A helical transmembrane segment spans residues A301–L319. Topologically, residues A320–L337 are extracellular. The chain crosses the membrane as a helical span at residues L338–V363. Residues D364–T391 are Cytoplasmic-facing.

The protein belongs to the ammonia transporter channel (TC 1.A.11.2) family. Homotrimer.

It localises to the cell membrane. Functionally, involved in the uptake of ammonium/ammonia (NH(4)(+)/NH(3)). Transport is electrogenic. Transport the ammonium and methylammonium cation with high specificity. The chain is Ammonium transporter Amt1 from Archaeoglobus fulgidus (strain ATCC 49558 / DSM 4304 / JCM 9628 / NBRC 100126 / VC-16).